Reading from the N-terminus, the 921-residue chain is Isoleucine--tRNA ligase 1 (921 aa).

The 'HIGH' region motif lies at 57–67; the sequence is PYANGDIHMGH. E552 serves as a coordination point for L-isoleucyl-5'-AMP. The short motif at 593 to 597 is the 'KMSKS' region element; that stretch reads KMSKS. K596 is an ATP binding site. C888, C891, C908, and C911 together coordinate Zn(2+).

Belongs to the class-I aminoacyl-tRNA synthetase family. IleS type 1 subfamily. As to quaternary structure, monomer. Zn(2+) is required as a cofactor.

It is found in the cytoplasm. It carries out the reaction tRNA(Ile) + L-isoleucine + ATP = L-isoleucyl-tRNA(Ile) + AMP + diphosphate. In terms of biological role, catalyzes the attachment of isoleucine to tRNA(Ile). As IleRS can inadvertently accommodate and process structurally similar amino acids such as valine, to avoid such errors it has two additional distinct tRNA(Ile)-dependent editing activities. One activity is designated as 'pretransfer' editing and involves the hydrolysis of activated Val-AMP. The other activity is designated 'posttransfer' editing and involves deacylation of mischarged Val-tRNA(Ile). This chain is Isoleucine--tRNA ligase 1, found in Bacillus thuringiensis subsp. konkukian (strain 97-27).